Reading from the N-terminus, the 252-residue chain is Ureidoacrylate amidohydrolase RutB (252 aa).

Over residues 1–14 (MSTPARNTTLTSNT) the composition is skewed to polar residues. The tract at residues 1-31 (MSTPARNTTLTSNTPAGAPRLPGAPAPQVLP) is disordered. A compositionally biased stretch (low complexity) spans 15–27 (PAGAPRLPGAPAP). Aspartate 50 functions as the Proton acceptor in the catalytic mechanism. Residue lysine 159 is part of the active site. Cysteine 192 acts as the Nucleophile in catalysis.

This sequence belongs to the isochorismatase family. RutB subfamily.

The catalysed reaction is (Z)-3-ureidoacrylate + H2O + H(+) = (Z)-3-aminoacrylate + NH4(+) + CO2. It catalyses the reaction (Z)-3-ureidoacrylate + H2O = (Z)-3-aminoacrylate + carbamate + H(+). It carries out the reaction (Z)-2-methylureidoacrylate + H2O + H(+) = (Z)-2-methylaminoacrylate + NH4(+) + CO2. Its function is as follows. Hydrolyzes ureidoacrylate to form aminoacrylate and carbamate. The carbamate hydrolyzes spontaneously, thereby releasing one of the nitrogen atoms of the pyrimidine ring as ammonia and one of its carbon atoms as CO2. This chain is Ureidoacrylate amidohydrolase RutB, found in Variovorax paradoxus (strain S110).